The following is a 547-amino-acid chain: DNA polymerase kappa (547 aa).

Positions 18–39 (LTIEDDGSSSSDEEATLKRRLA) are disordered. The segment covering 20-31 (IEDDGSSSSDEE) has biased composition (acidic residues). Residues 132–316 (IVHVDCDAFY…LPVREVSGIG (185 aa)) enclose the UmuC domain. Residues Asp-136 and Asp-226 each coordinate Mg(2+). Residues 489-518 (TVPCPVCQKNIENELGILNQHVDLCLNVET) form a UBZ4-type zinc finger. Residues Cys-492, Cys-495, His-509, and Cys-513 each contribute to the Zn(2+) site.

Interacts with hus1 and rad17.

The protein localises to the cytoplasm. Its subcellular location is the nucleus. The enzyme catalyses DNA(n) + a 2'-deoxyribonucleoside 5'-triphosphate = DNA(n+1) + diphosphate. Its function is as follows. DNA polymerase specifically involved in DNA repair. Plays an important role in translesion synthesis, where the normal high-fidelity DNA polymerases cannot proceed and DNA synthesis stalls. Has a role in meiosis. The sequence is that of DNA polymerase kappa (mug40) from Schizosaccharomyces pombe (strain 972 / ATCC 24843) (Fission yeast).